Here is a 484-residue protein sequence, read N- to C-terminus: Glutamate--tRNA ligase (484 aa).

The short motif at 11–21 (PSPTGYLHIGN) is the 'HIGH' region element. Residues 252–256 (KLSKR) carry the 'KMSKS' region motif. Lysine 255 provides a ligand contact to ATP.

This sequence belongs to the class-I aminoacyl-tRNA synthetase family. Glutamate--tRNA ligase type 1 subfamily. In terms of assembly, monomer.

The protein resides in the cytoplasm. It catalyses the reaction tRNA(Glu) + L-glutamate + ATP = L-glutamyl-tRNA(Glu) + AMP + diphosphate. Catalyzes the attachment of glutamate to tRNA(Glu) in a two-step reaction: glutamate is first activated by ATP to form Glu-AMP and then transferred to the acceptor end of tRNA(Glu). This is Glutamate--tRNA ligase from Staphylococcus haemolyticus (strain JCSC1435).